The chain runs to 300 residues: Geranylgeranyl pyrophosphate synthase (300 aa).

Methionine 1 carries the post-translational modification N-acetylmethionine. Isopentenyl diphosphate-binding residues include lysine 25, arginine 28, and histidine 57. Residues aspartate 64 and aspartate 68 each contribute to the Mg(2+) site. A dimethylallyl diphosphate-binding site is contributed by arginine 73. Residue arginine 74 participates in isopentenyl diphosphate binding. Lysine 151, threonine 152, glutamine 185, lysine 202, and lysine 212 together coordinate dimethylallyl diphosphate.

This sequence belongs to the FPP/GGPP synthase family. As to quaternary structure, homohexamer; trimer of homodimers. The cofactor is Mg(2+). Abundantly expressed in testis. Found in other tissues to a lower extent. Expressed in dermal fibroblast and skeletal muscle.

Its subcellular location is the cytoplasm. It localises to the perinuclear region. The protein localises to the myofibril. It is found in the sarcomere. The protein resides in the z line. It catalyses the reaction isopentenyl diphosphate + dimethylallyl diphosphate = (2E)-geranyl diphosphate + diphosphate. The catalysed reaction is isopentenyl diphosphate + (2E)-geranyl diphosphate = (2E,6E)-farnesyl diphosphate + diphosphate. The enzyme catalyses isopentenyl diphosphate + (2E,6E)-farnesyl diphosphate = (2E,6E,10E)-geranylgeranyl diphosphate + diphosphate. Its pathway is isoprenoid biosynthesis; farnesyl diphosphate biosynthesis; farnesyl diphosphate from geranyl diphosphate and isopentenyl diphosphate: step 1/1. It participates in isoprenoid biosynthesis; geranyl diphosphate biosynthesis; geranyl diphosphate from dimethylallyl diphosphate and isopentenyl diphosphate: step 1/1. It functions in the pathway isoprenoid biosynthesis; geranylgeranyl diphosphate biosynthesis; geranylgeranyl diphosphate from farnesyl diphosphate and isopentenyl diphosphate: step 1/1. Its activity is regulated as follows. Subject to product inhibition by geranylgeranyl diphosphate. In terms of biological role, catalyzes the trans-addition of the three molecules of IPP onto DMAPP to form geranylgeranyl pyrophosphate, an important precursor of carotenoids and geranylated proteins. This is Geranylgeranyl pyrophosphate synthase (GGPS1) from Homo sapiens (Human).